The chain runs to 60 residues: Toxin 5 (60 aa).

Intrachain disulfides connect C3–C22, C17–C39, C41–C52, and C53–C58.

This sequence belongs to the three-finger toxin family. Short-chain subfamily. Type I alpha-neurotoxin sub-subfamily. Expressed by the venom gland.

The protein localises to the secreted. Functionally, binds to muscle nicotinic acetylcholine receptor (nAChR) and inhibit acetylcholine from binding to the receptor, thereby impairing neuromuscular transmission. The protein is Toxin 5 of Hydrophis schistosus (Beaked sea snake).